The following is a 423-amino-acid chain: Dihydroorotase (423 aa).

Histidine 56 and histidine 58 together coordinate Zn(2+). Substrate contacts are provided by residues 58–60 (HFR) and asparagine 89. Zn(2+)-binding residues include lysine 137, histidine 168, histidine 227, and aspartate 302. Residue lysine 137 is modified to N6-carboxylysine. The active site involves aspartate 302. Position 306 (histidine 306) interacts with substrate.

Belongs to the metallo-dependent hydrolases superfamily. DHOase family. Class I DHOase subfamily. Zn(2+) is required as a cofactor.

The catalysed reaction is (S)-dihydroorotate + H2O = N-carbamoyl-L-aspartate + H(+). It functions in the pathway pyrimidine metabolism; UMP biosynthesis via de novo pathway; (S)-dihydroorotate from bicarbonate: step 3/3. Its function is as follows. Catalyzes the reversible cyclization of carbamoyl aspartate to dihydroorotate. The protein is Dihydroorotase of Methanocaldococcus jannaschii (strain ATCC 43067 / DSM 2661 / JAL-1 / JCM 10045 / NBRC 100440) (Methanococcus jannaschii).